The primary structure comprises 282 residues: Nucleotide-binding protein Fnod_1159 (282 aa).

9-16 provides a ligand contact to ATP; that stretch reads GHSGAGKS. 57-60 serves as a coordination point for GTP; that stretch reads DIRS.

It belongs to the RapZ-like family.

In terms of biological role, displays ATPase and GTPase activities. The protein is Nucleotide-binding protein Fnod_1159 of Fervidobacterium nodosum (strain ATCC 35602 / DSM 5306 / Rt17-B1).